The primary structure comprises 944 residues: MKRKDNKELICIPSSSPPSTPIREENYYLLTSSPIECSPIQQLDLSGSFKNYSTTSSRANGKKFGQLAMQSRIFFDTTDHKKYVESSYAAYDPHDQPPERDVSLKESSNKINPSNFFDSEQITKINAVKKRFPALDSEMIIATLEKFNWRENITIHKLTFQKLLGRGNSTINKSAQKLNNQPIEKSSVDKENAKRKRYVEEGTKQGQKKKPLRVIELSDEETNEDDLLGQSPTACTTDANIDNSIPENSDKIEEVSIESSGPSEVEDEMSEYDVRVLNFLNESTLQEIVEVSGCESKVVEYFISKRPFPSLEKAEALCQRNAHAATGKRKKSDGRNVGRKLVNSTYEVLQGFDAVDSLIAKCERYGAMISNTMRSWHNLFDDKKMEQFLNTSTGSISYEYNSQQPSSIASGITLKSYQIVGLNWLCLMYKAKLSGILADEMGLGKTCQVISFLASLKEKGIQNRHLVVVPSSTLGNWLREFEKFCPSLRVESYSGTQSERINKRYYLMDTDFDVLVTTYQLASGSRDDRSFLRKQRFDISIFDEGHYLKNRMSERYKHLMNIPANFRLLITGTPLQNNLKELISLLAFMLPKVFDNNMQGLDIIYKIKTTSDGDIERAYLSQERISRAKTIMNPFILRRRKENVLSDLPPKIQHVEYCHMEETQLSLYLSVLELKNLVNANRENILMQLRKAALHQLLFRSQYNLETLSLMSKRILREDAYLDANPQYIFEDMEVMSDFELHKLADQYRHLHPFALKGKPWMDSAKVKKLCSLLKKSRPNERILIFSQFTQVLDILEYVLNTLDLEFLRLDGSTPVETRQQLIDDFHTNENYKVFLLSTKSGGFGINLTCANIVILFDCSFNPFDDMQAEDRAHRVGQTRPVHVYRLITKNTIEENIRRLANTKLTLESSLTTDSEKIQKEISGELMKSLQMDGRVDTMDGSVV.

Disordered stretches follow at residues 89-109 (AAYDPHDQPPERDVSLKESSN) and 174-246 (SAQK…NSIP). Residues 92 to 108 (DPHDQPPERDVSLKESS) are compositionally biased toward basic and acidic residues. The segment covering 174-184 (SAQKLNNQPIE) has biased composition (polar residues). The segment covering 186–203 (SSVDKENAKRKRYVEEGT) has biased composition (basic and acidic residues). The segment covering 217–227 (LSDEETNEDDL) has biased composition (acidic residues). Polar residues predominate over residues 230–246 (QSPTACTTDANIDNSIP). In terms of domain architecture, Helicase ATP-binding spans 426-592 (CLMYKAKLSG…ISLLAFMLPK (167 aa)). 439–446 (DEMGLGKT) serves as a coordination point for ATP. The short motif at 543-546 (DEGH) is the DEGH box element. The Helicase C-terminal domain occupies 766 to 923 (KVKKLCSLLK…DSEKIQKEIS (158 aa)).

It belongs to the SNF2/RAD54 helicase family.

Its subcellular location is the nucleus. It carries out the reaction ATP + H2O = ADP + phosphate + H(+). In terms of biological role, DNA helicase that possesses intrinsic ATP-dependent nucleosome-remodeling activity and is required for heterochromatin organization. In Schizosaccharomyces pombe (strain 972 / ATCC 24843) (Fission yeast), this protein is ATP-dependent helicase fft1 (fft1).